The sequence spans 239 residues: Lectin (239 aa).

Asn17 and Asn113 each carry an N-linked (GlcNAc...) asparagine glycan.

Belongs to the leguminous lectin family. As to quaternary structure, homodimer.

In terms of biological role, galactose and N-acetyllactosamine specific lectin. In Erythrina crista-galli (Cockspur coral tree), this protein is Lectin.